The chain runs to 102 residues: Large ribosomal subunit protein uL24 (102 aa).

It belongs to the universal ribosomal protein uL24 family. In terms of assembly, part of the 50S ribosomal subunit.

Its function is as follows. One of two assembly initiator proteins, it binds directly to the 5'-end of the 23S rRNA, where it nucleates assembly of the 50S subunit. One of the proteins that surrounds the polypeptide exit tunnel on the outside of the subunit. The sequence is that of Large ribosomal subunit protein uL24 from Ralstonia nicotianae (strain ATCC BAA-1114 / GMI1000) (Ralstonia solanacearum).